Consider the following 318-residue polypeptide: MQLEFLGTGSGQPSKFRNVTSIALRLLDERNAVWLFDVGEATQHQILKTTLRPRKVEKIFITHLHGDHIFGLPGFLSSRSFQGADKNEPLTIYGPKGVKEFVQTALRISETRLSYPIEYVDLTEGVIFEDHTFQVVAAPMRHRIETWGFRVIEKDHPGELLVDKLKQGNIPSGPVYGQLKAGKTVTLPDGRIVNGHDFIGKAQKGRIVTFILDTRPNDNVEWLAKNADVLVHESTYGSSEEEAKMAKAHAHSTSANAASVARRAHVNKLVLTHLSARYIGPMVKELIHDVRRNFANTYVARDFDIIDIPFKKDSNESK.

Zn(2+) contacts are provided by histidine 63, histidine 65, aspartate 67, histidine 68, histidine 142, aspartate 213, and histidine 273. Aspartate 67 acts as the Proton acceptor in catalysis.

The protein belongs to the RNase Z family. Homodimer. Zn(2+) serves as cofactor.

It carries out the reaction Endonucleolytic cleavage of RNA, removing extra 3' nucleotides from tRNA precursor, generating 3' termini of tRNAs. A 3'-hydroxy group is left at the tRNA terminus and a 5'-phosphoryl group is left at the trailer molecule.. Zinc phosphodiesterase, which displays some tRNA 3'-processing endonuclease activity. Probably involved in tRNA maturation, by removing a 3'-trailer from precursor tRNA. In Leuconostoc mesenteroides subsp. mesenteroides (strain ATCC 8293 / DSM 20343 / BCRC 11652 / CCM 1803 / JCM 6124 / NCDO 523 / NBRC 100496 / NCIMB 8023 / NCTC 12954 / NRRL B-1118 / 37Y), this protein is Ribonuclease Z.